A 314-amino-acid polypeptide reads, in one-letter code: Olfactory receptor 2W3 (314 aa).

Residues 1–25 (MDGTNGSTQTHFILLGFSDRPHLER) are Extracellular-facing. Asn-5 carries N-linked (GlcNAc...) asparagine glycosylation. Residues 26 to 49 (ILFVVILIAYLLTLVGNTTIILVS) form a helical membrane-spanning segment. Topologically, residues 50-57 (RLDPHLHT) are cytoplasmic. Residues 58-79 (PMYFFLAHLSFLDLSFTTSSIP) form a helical membrane-spanning segment. The Extracellular segment spans residues 80–100 (QLLYNLNGCDKTISYMGCAIQ). The chain crosses the membrane as a helical span at residues 101–120 (LFLFLGLGGVECLLLAVMAY). At 121 to 139 (DRCVAICKPLHYMVIMNPR) the chain is on the cytoplasmic side. The helical transmembrane segment at 140 to 158 (LCRGLVSVTWGCGVANSLA) threads the bilayer. The Extracellular portion of the chain corresponds to 159 to 195 (MSPVTLRLPRCGHHEVDHFLREMPALIRMACVSTVAI). The chain crosses the membrane as a helical span at residues 196 to 219 (EGTVFVLAVGVVLSPLVFILLSYS). The Cytoplasmic portion of the chain corresponds to 220-236 (YIVRAVLQIRSASGRQK). A helical membrane pass occupies residues 237 to 259 (AFGTCGSHLTVVSLFYGNIIYMY). The Extracellular segment spans residues 260 to 272 (MQPGASSSQDQGM). Residues 273–292 (FLMLFYNIVTPLLNPLIYTL) traverse the membrane as a helical segment. At 293–314 (RNREVKGALGRLLLGKRELGKE) the chain is on the cytoplasmic side.

It belongs to the G-protein coupled receptor 1 family.

It is found in the cell membrane. In terms of biological role, odorant receptor. The chain is Olfactory receptor 2W3 (OR2W3) from Homo sapiens (Human).